The chain runs to 601 residues: Probable N-acetylgalactosaminyltransferase 7 (601 aa).

At 1–20 (MIIARKKLQLQRLWRQRGCR) the chain is on the cytoplasmic side. A helical; Signal-anchor for type II membrane protein transmembrane segment spans residues 21–38 (VATYICLGVLVLFGFVYN). Topologically, residues 39-601 (SKGNSMSSIK…FVWKEFYQSS (563 aa)) are lumenal. The segment at 61–108 (DLTNKELPGGPDPNTIFRGSELGNYEPKEPEIPSNQPGEHGKPVPVTD) is disordered. The N-linked (GlcNAc...) asparagine glycan is linked to N135. Disulfide bonds link C146–C382, C373–C452, C490–C506, C529–C542, and C568–C583. The tract at residues 155–265 (LPTVSVVVVF…TNWLPPLLAP (111 aa)) is catalytic subdomain A. Substrate is bound by residues D196 and R226. D249 and H251 together coordinate Mn(2+). The tract at residues 328 to 390 (PFRSPTHAGG…PCSHVGHVYR (63 aa)) is catalytic subdomain B. W359 contacts substrate. H387 lines the Mn(2+) pocket. Substrate-binding residues include R390 and Y395. Residues 477–595 (DVWGEARNPA…DNERQKFVWK (119 aa)) form the Ricin B-type lectin domain.

It belongs to the glycosyltransferase 2 family. GalNAc-T subfamily. Mn(2+) serves as cofactor.

The protein localises to the golgi apparatus membrane. It functions in the pathway protein modification; protein glycosylation. Its function is as follows. Probable glycopeptide transferase involved in O-linked oligosaccharide biosynthesis. Glycopeptide transferases catalyze the transfer of an N-acetyl-D-galactosamine residue to an already glycosylated peptide. In contrast to other members of the family, it does not act as a peptide transferase that transfers GalNAc onto serine or threonine residue on peptides that have been tested. Some peptide transferase activity is however not excluded, considering that its appropriate peptide substrate may remain unidentified. In Caenorhabditis elegans, this protein is Probable N-acetylgalactosaminyltransferase 7 (gly-7).